The following is an 855-amino-acid chain: Pentatricopeptide repeat-containing protein At1g74750 (855 aa).

The tract at residues 21 to 40 (GSRPSAADGNSCTCAEDESG) is disordered. PPR repeat units lie at residues 358-392 (DGHT…GCKP), 393-427 (NTVT…GCEP), 428-462 (DRVT…GLSP), 463-497 (DTFT…GCTP), 498-532 (NLVT…GFQP), 533-567 (DKVT…NWVP), 568-602 (DEPV…GLRP), and 603-637 (NVPT…GLHP). The region spanning 755 to 838 (INLHVMSEGT…NSGCFVGSGE (84 aa)) is the Smr domain.

The protein belongs to the PPR family. P subfamily.

In Arabidopsis thaliana (Mouse-ear cress), this protein is Pentatricopeptide repeat-containing protein At1g74750.